Reading from the N-terminus, the 180-residue chain is ATP synthase subunit delta (180 aa).

This sequence belongs to the ATPase delta chain family. As to quaternary structure, F-type ATPases have 2 components, F(1) - the catalytic core - and F(0) - the membrane proton channel. F(1) has five subunits: alpha(3), beta(3), gamma(1), delta(1), epsilon(1). F(0) has three main subunits: a(1), b(2) and c(10-14). The alpha and beta chains form an alternating ring which encloses part of the gamma chain. F(1) is attached to F(0) by a central stalk formed by the gamma and epsilon chains, while a peripheral stalk is formed by the delta and b chains.

It localises to the cell membrane. F(1)F(0) ATP synthase produces ATP from ADP in the presence of a proton or sodium gradient. F-type ATPases consist of two structural domains, F(1) containing the extramembraneous catalytic core and F(0) containing the membrane proton channel, linked together by a central stalk and a peripheral stalk. During catalysis, ATP synthesis in the catalytic domain of F(1) is coupled via a rotary mechanism of the central stalk subunits to proton translocation. Functionally, this protein is part of the stalk that links CF(0) to CF(1). It either transmits conformational changes from CF(0) to CF(1) or is implicated in proton conduction. The sequence is that of ATP synthase subunit delta from Dehalococcoides mccartyi (strain ATCC BAA-2100 / JCM 16839 / KCTC 5957 / BAV1).